A 307-amino-acid chain; its full sequence is MmsAB operon regulatory protein (307 aa).

Residues 201–299 (DGLHAYMREH…GLSPSAYRQR (99 aa)) form the HTH araC/xylS-type domain. 2 DNA-binding regions (H-T-H motif) span residues 218–239 (ERLA…KAIT) and 266–289 (VARV…SKVM).

Functionally, regulatory protein for the mmsAB operon. Activates the transcription of the mmsAB genes. The polypeptide is MmsAB operon regulatory protein (Pseudomonas aeruginosa (strain ATCC 15692 / DSM 22644 / CIP 104116 / JCM 14847 / LMG 12228 / 1C / PRS 101 / PAO1)).